The chain runs to 180 residues: Shikimate kinase (180 aa).

Residue 14 to 19 (GAGKSS) coordinates ATP. Serine 18 contributes to the Mg(2+) binding site. Substrate-binding residues include aspartate 36, arginine 60, and glycine 82. Arginine 120 lines the ATP pocket. Arginine 139 lines the substrate pocket.

The protein belongs to the shikimate kinase family. As to quaternary structure, monomer. Mg(2+) is required as a cofactor.

It localises to the cytoplasm. The enzyme catalyses shikimate + ATP = 3-phosphoshikimate + ADP + H(+). It participates in metabolic intermediate biosynthesis; chorismate biosynthesis; chorismate from D-erythrose 4-phosphate and phosphoenolpyruvate: step 5/7. Its function is as follows. Catalyzes the specific phosphorylation of the 3-hydroxyl group of shikimic acid using ATP as a cosubstrate. The sequence is that of Shikimate kinase from Xylella fastidiosa (strain M23).